We begin with the raw amino-acid sequence, 701 residues long: Elongation factor G (701 aa).

In terms of domain architecture, tr-type G spans 8–291 (SRYRNIGIVA…AVIDYLPAPI (284 aa)). Residues 17-24 (AHVDAGKT), 89-93 (DTPGH), and 143-146 (NKMD) contribute to the GTP site.

This sequence belongs to the TRAFAC class translation factor GTPase superfamily. Classic translation factor GTPase family. EF-G/EF-2 subfamily.

The protein localises to the cytoplasm. Catalyzes the GTP-dependent ribosomal translocation step during translation elongation. During this step, the ribosome changes from the pre-translocational (PRE) to the post-translocational (POST) state as the newly formed A-site-bound peptidyl-tRNA and P-site-bound deacylated tRNA move to the P and E sites, respectively. Catalyzes the coordinated movement of the two tRNA molecules, the mRNA and conformational changes in the ribosome. The chain is Elongation factor G from Pseudomonas syringae pv. tomato (strain ATCC BAA-871 / DC3000).